The following is a 696-amino-acid chain: Polyribonucleotide nucleotidyltransferase (696 aa).

Mg(2+) is bound by residues Asp-486 and Asp-492. In terms of domain architecture, KH spans 553-612 (PRITQKQIPKDRIGELIGPGGKMIRAIIEQSGSEISVDDSGKVTIASPSEESKEKAIAMI). The 69-residue stretch at 622-690 (GKIYDGVIKR…KMGKIDLSRK (69 aa)) folds into the S1 motif domain.

It belongs to the polyribonucleotide nucleotidyltransferase family. Requires Mg(2+) as cofactor.

Its subcellular location is the cytoplasm. The enzyme catalyses RNA(n+1) + phosphate = RNA(n) + a ribonucleoside 5'-diphosphate. Its function is as follows. Involved in mRNA degradation. Catalyzes the phosphorolysis of single-stranded polyribonucleotides processively in the 3'- to 5'-direction. This chain is Polyribonucleotide nucleotidyltransferase, found in Leptospira biflexa serovar Patoc (strain Patoc 1 / ATCC 23582 / Paris).